The chain runs to 661 residues: Hemocyanin C chain (661 aa).

A disulfide bridge connects residues Cys3 and Cys557. His200, His204, His230, His350, His354, and His390 together coordinate Cu cation. A glycan (N-linked (GlcNAc...) asparagine) is linked at Asn476.

It belongs to the tyrosinase family. Hemocyanin subfamily. In terms of assembly, hexamer of a number of different chains, of which A, B, and C have been identified. As to expression, hemolymph.

It localises to the secreted. Its subcellular location is the extracellular space. Its function is as follows. Hemocyanins are copper-containing oxygen carriers occurring freely dissolved in the hemolymph of many mollusks and arthropods. The protein is Hemocyanin C chain of Panulirus interruptus (California spiny lobster).